Here is a 186-residue protein sequence, read N- to C-terminus: Der GTPase-activating protein YihI (186 aa).

The segment at 39 to 77 (LDAKAREDKKKRKHKGLASGSRHSAVEEKANKLQNEIKD) is disordered. Positions 62–77 (SAVEEKANKLQNEIKD) are enriched in basic and acidic residues.

It belongs to the YihI family. Interacts with Der.

Functionally, a GTPase-activating protein (GAP) that modifies Der/EngA GTPase function. May play a role in ribosome biogenesis. This is Der GTPase-activating protein YihI from Haemophilus influenzae (strain 86-028NP).